Consider the following 217-residue polypeptide: Ras-related protein RABA1g (217 aa).

20-27 (GDSGVGKS) lines the GTP pocket. An Effector region motif is present at residues 42–50 (SKSTIGVEF). GTP-binding positions include 68 to 72 (DTAGQ), 126 to 129 (NKAD), and 156 to 157 (SA). Residues cysteine 214 and cysteine 215 are each lipidated (S-geranylgeranyl cysteine).

Belongs to the small GTPase superfamily. Rab family.

The protein resides in the cell membrane. Its function is as follows. Intracellular vesicle trafficking and protein transport. In Arabidopsis thaliana (Mouse-ear cress), this protein is Ras-related protein RABA1g (RABA1G).